The following is a 192-amino-acid chain: MNTEDVLAVFREAGAILEGHFILTSGLRSPVFLQKARVFMHADKTEKLCKALAEKIQAADLGPIDYVVGPAIGGLIPSYETSRHLRVPSVWVERENGVFRLRRFDVPKGARVVIVEDIVTTGLSIRETIDCMKDLGIEVVAAACIVDRSAGKADVGTKLIALAEYEVPAYPADKLPPELAAIPAVKPGSRNI.

116–124 (EDIVTTGLS) is a 5-phospho-alpha-D-ribose 1-diphosphate binding site. Orotate is bound by residues Thr-120 and Arg-148.

The protein belongs to the purine/pyrimidine phosphoribosyltransferase family. PyrE subfamily. As to quaternary structure, homodimer. Mg(2+) is required as a cofactor.

The enzyme catalyses orotidine 5'-phosphate + diphosphate = orotate + 5-phospho-alpha-D-ribose 1-diphosphate. The protein operates within pyrimidine metabolism; UMP biosynthesis via de novo pathway; UMP from orotate: step 1/2. In terms of biological role, catalyzes the transfer of a ribosyl phosphate group from 5-phosphoribose 1-diphosphate to orotate, leading to the formation of orotidine monophosphate (OMP). The protein is Orotate phosphoribosyltransferase of Brucella anthropi (strain ATCC 49188 / DSM 6882 / CCUG 24695 / JCM 21032 / LMG 3331 / NBRC 15819 / NCTC 12168 / Alc 37) (Ochrobactrum anthropi).